The primary structure comprises 297 residues: tRNA dimethylallyltransferase (297 aa).

10-17 (GITASGKS) is a binding site for ATP. Residue 12-17 (TASGKS) participates in substrate binding. An interaction with substrate tRNA region spans residues 36-39 (DSKQ).

It belongs to the IPP transferase family. As to quaternary structure, monomer. The cofactor is Mg(2+).

It carries out the reaction adenosine(37) in tRNA + dimethylallyl diphosphate = N(6)-dimethylallyladenosine(37) in tRNA + diphosphate. Its function is as follows. Catalyzes the transfer of a dimethylallyl group onto the adenine at position 37 in tRNAs that read codons beginning with uridine, leading to the formation of N6-(dimethylallyl)adenosine (i(6)A). In Wolbachia pipientis subsp. Culex pipiens (strain wPip), this protein is tRNA dimethylallyltransferase.